Here is a 210-residue protein sequence, read N- to C-terminus: ATP-dependent Clp protease proteolytic subunit (210 aa).

S106 acts as the Nucleophile in catalysis. Residue H131 is part of the active site.

This sequence belongs to the peptidase S14 family. In terms of assembly, fourteen ClpP subunits assemble into 2 heptameric rings which stack back to back to give a disk-like structure with a central cavity, resembling the structure of eukaryotic proteasomes.

The protein resides in the cytoplasm. The catalysed reaction is Hydrolysis of proteins to small peptides in the presence of ATP and magnesium. alpha-casein is the usual test substrate. In the absence of ATP, only oligopeptides shorter than five residues are hydrolyzed (such as succinyl-Leu-Tyr-|-NHMec, and Leu-Tyr-Leu-|-Tyr-Trp, in which cleavage of the -Tyr-|-Leu- and -Tyr-|-Trp bonds also occurs).. Its function is as follows. Cleaves peptides in various proteins in a process that requires ATP hydrolysis. Has a chymotrypsin-like activity. Plays a major role in the degradation of misfolded proteins. The protein is ATP-dependent Clp protease proteolytic subunit of Bartonella henselae (strain ATCC 49882 / DSM 28221 / CCUG 30454 / Houston 1) (Rochalimaea henselae).